Here is a 292-residue protein sequence, read N- to C-terminus: 5,10-methylenetetrahydrofolate reductase (292 aa).

The Proton donor/acceptor role is filled by Glu-28. Thr-59 is an NADH binding site. Positions 60, 62, 88, 118, 119, 120, 132, 152, 156, 165, 168, 171, and 172 each coordinate FAD. Position 120 (Asp-120) interacts with (6S)-5-methyl-5,6,7,8-tetrahydrofolate. Gln-183 lines the NADH pocket. Residues Gln-183, Gln-219, and Lys-279 each contribute to the (6S)-5-methyl-5,6,7,8-tetrahydrofolate site.

The protein belongs to the methylenetetrahydrofolate reductase family. Requires FAD as cofactor.

The catalysed reaction is (6S)-5-methyl-5,6,7,8-tetrahydrofolate + NAD(+) = (6R)-5,10-methylene-5,6,7,8-tetrahydrofolate + NADH + H(+). It functions in the pathway one-carbon metabolism; tetrahydrofolate interconversion. It participates in amino-acid biosynthesis; L-methionine biosynthesis via de novo pathway. In terms of biological role, catalyzes the NADH-dependent reduction of 5,10-methylenetetrahydrofolate to 5-methyltetrahydrofolate. Is required to provide the methyl group necessary for methionine synthetase to convert homocysteine to methionine; the methyl group is given by 5-methyltetrahydrofolate. The protein is 5,10-methylenetetrahydrofolate reductase (metF) of Buchnera aphidicola subsp. Schizaphis graminum (strain Sg).